The following is a 191-amino-acid chain: MRTGRMSRKTKETDIQLELNLDGTGIADVNTGIGFFDHMLTSFARHAEFDLKVRAEGDLYVDEHHLVEDTGIVLGKVLAEALGDMAGTARFGEARIPMDEALADVALDIGGRSYLVLKAEFASPQVGQFSTQLVKHFFETLASNAKITIHASVYGDNDHHKIEALFKAFAYAMKRAVKIEGKEVKSTKGTL.

The protein belongs to the imidazoleglycerol-phosphate dehydratase family.

It localises to the cytoplasm. It carries out the reaction D-erythro-1-(imidazol-4-yl)glycerol 3-phosphate = 3-(imidazol-4-yl)-2-oxopropyl phosphate + H2O. Its pathway is amino-acid biosynthesis; L-histidine biosynthesis; L-histidine from 5-phospho-alpha-D-ribose 1-diphosphate: step 6/9. The sequence is that of Imidazoleglycerol-phosphate dehydratase from Methanosarcina barkeri (strain Fusaro / DSM 804).